The chain runs to 834 residues: Periplasmic nitrate reductase (834 aa).

A signal peptide (tat-type signal) is located at residues 1–31; the sequence is MSSELTRRNLLKAHAAGIAAATAGIALPAAA. The 57-residue stretch at 43–99 folds into the 4Fe-4S Mo/W bis-MGD-type domain; sequence IKWSKAPCRFCGTGCGVMVGVKEGKVVATHGDMQAEVNRGLNCIKGYFLSKIMYGKD. [4Fe-4S] cluster-binding residues include cysteine 50, cysteine 53, cysteine 57, and cysteine 85. Residues lysine 87, glutamine 154, asparagine 179, cysteine 183, 216-223, 247-251, 266-268, methionine 377, glutamine 381, asparagine 487, 513-514, lysine 536, aspartate 563, and 723-732 each bind Mo-bis(molybdopterin guanine dinucleotide); these read WGSNMAEM, STFTH, GTD, SD, and TGRVLEHWHS. A substrate-binding site is contributed by tryptophan 799. Mo-bis(molybdopterin guanine dinucleotide)-binding residues include asparagine 807 and lysine 824.

It belongs to the prokaryotic molybdopterin-containing oxidoreductase family. NasA/NapA/NarB subfamily. In terms of assembly, component of the periplasmic nitrate reductase NapAB complex composed of NapA and NapB. [4Fe-4S] cluster serves as cofactor. It depends on Mo-bis(molybdopterin guanine dinucleotide) as a cofactor. In terms of processing, predicted to be exported by the Tat system. The position of the signal peptide cleavage has not been experimentally proven.

It localises to the periplasm. It catalyses the reaction 2 Fe(II)-[cytochrome] + nitrate + 2 H(+) = 2 Fe(III)-[cytochrome] + nitrite + H2O. Functionally, catalytic subunit of the periplasmic nitrate reductase complex NapAB. Receives electrons from NapB and catalyzes the reduction of nitrate to nitrite. The polypeptide is Periplasmic nitrate reductase (Agrobacterium fabrum (strain C58 / ATCC 33970) (Agrobacterium tumefaciens (strain C58))).